Reading from the N-terminus, the 122-residue chain is Large ribosomal subunit protein uL14 (122 aa).

This sequence belongs to the universal ribosomal protein uL14 family. As to quaternary structure, part of the 50S ribosomal subunit. Forms a cluster with proteins L3 and L19. In the 70S ribosome, L14 and L19 interact and together make contacts with the 16S rRNA in bridges B5 and B8.

Functionally, binds to 23S rRNA. Forms part of two intersubunit bridges in the 70S ribosome. This is Large ribosomal subunit protein uL14 from Borreliella afzelii (strain PKo) (Borrelia afzelii).